We begin with the raw amino-acid sequence, 206 residues long: Small ribosomal subunit protein uS4 (206 aa).

Residues 96-158 form the S4 RNA-binding domain; that stretch reads SRLDNVVYRM…AKKQSRIKAA (63 aa).

The protein belongs to the universal ribosomal protein uS4 family. As to quaternary structure, part of the 30S ribosomal subunit. Contacts protein S5. The interaction surface between S4 and S5 is involved in control of translational fidelity.

Functionally, one of the primary rRNA binding proteins, it binds directly to 16S rRNA where it nucleates assembly of the body of the 30S subunit. Its function is as follows. With S5 and S12 plays an important role in translational accuracy. The chain is Small ribosomal subunit protein uS4 from Wigglesworthia glossinidia brevipalpis.